A 305-amino-acid chain; its full sequence is Small ribosomal subunit protein bS1B (305 aa).

S1 motif domains are found at residues 29–98 (GQTV…LSRR), 116–180 (GKTL…LTQR), and 194–262 (GNIY…LSTR).

The protein belongs to the bacterial ribosomal protein bS1 family.

In terms of biological role, binds mRNA. The polypeptide is Small ribosomal subunit protein bS1B (rps1b) (Synechocystis sp. (strain ATCC 27184 / PCC 6803 / Kazusa)).